A 269-amino-acid polypeptide reads, in one-letter code: uncharacterized protein (269 aa).

6 consecutive transmembrane segments (helical) span residues 21–43, 48–70, 121–143, 147–166, 205–227, and 242–264; these read LNVW…ILFT, LFLI…FSLI, YLIL…VFTF, FIIA…FWII, SLEV…LFQF, and FVAF…YLLW.

It is found in the cell membrane. This is an uncharacterized protein from Aquifex aeolicus (strain VF5).